A 56-amino-acid chain; its full sequence is Bdellin B-3 (56 aa).

One can recognise a Kazal-like domain in the interval 1–42; the sequence is DTECVCTKELHRVCGSDGVTYDNECLATCHGASVAHDHACEG. 3 cysteine pairs are disulfide-bonded: C4-C29, C6-C25, and C14-C40.

Its function is as follows. Proteinase inhibitor. Blocks the activity of trypsin, plasmin and sperm acrosin. The protein is Bdellin B-3 of Hirudo medicinalis (Medicinal leech).